Reading from the N-terminus, the 474-residue chain is Aspartyl/glutamyl-tRNA(Asn/Gln) amidotransferase subunit B (474 aa).

The protein belongs to the GatB/GatE family. GatB subfamily. As to quaternary structure, heterotrimer of A, B and C subunits.

The catalysed reaction is L-glutamyl-tRNA(Gln) + L-glutamine + ATP + H2O = L-glutaminyl-tRNA(Gln) + L-glutamate + ADP + phosphate + H(+). It catalyses the reaction L-aspartyl-tRNA(Asn) + L-glutamine + ATP + H2O = L-asparaginyl-tRNA(Asn) + L-glutamate + ADP + phosphate + 2 H(+). Functionally, allows the formation of correctly charged Asn-tRNA(Asn) or Gln-tRNA(Gln) through the transamidation of misacylated Asp-tRNA(Asn) or Glu-tRNA(Gln) in organisms which lack either or both of asparaginyl-tRNA or glutaminyl-tRNA synthetases. The reaction takes place in the presence of glutamine and ATP through an activated phospho-Asp-tRNA(Asn) or phospho-Glu-tRNA(Gln). In Desulfotalea psychrophila (strain LSv54 / DSM 12343), this protein is Aspartyl/glutamyl-tRNA(Asn/Gln) amidotransferase subunit B.